The chain runs to 569 residues: Urease subunit alpha (569 aa).

The region spanning 131–569 is the Urease domain; the sequence is GGIDSHIHFI…LPLAQRYFLF (439 aa). Residues His-136, His-138, and Lys-219 each coordinate Ni(2+). Lys-219 is modified (N6-carboxylysine). His-221 provides a ligand contact to substrate. Ni(2+)-binding residues include His-248 and His-274. The active-site Proton donor is the His-322. A Ni(2+)-binding site is contributed by Asp-362.

Belongs to the metallo-dependent hydrolases superfamily. Urease alpha subunit family. In terms of assembly, heterotrimer of UreA (gamma), UreB (beta) and UreC (alpha) subunits. Three heterotrimers associate to form the active enzyme. Requires Ni cation as cofactor. Post-translationally, carboxylation allows a single lysine to coordinate two nickel ions.

It is found in the cytoplasm. It carries out the reaction urea + 2 H2O + H(+) = hydrogencarbonate + 2 NH4(+). Its pathway is nitrogen metabolism; urea degradation; CO(2) and NH(3) from urea (urease route): step 1/1. The chain is Urease subunit alpha from Herpetosiphon aurantiacus (strain ATCC 23779 / DSM 785 / 114-95).